Consider the following 504-residue polypeptide: uncharacterized protein (504 aa).

The disordered stretch occupies residues 36 to 60 (TAFRMEKEQRLPSQNKPPRGRRRPD). The 185-residue stretch at 125-309 (QTHEPGRLGL…RPHLQVLPER (185 aa)) folds into the Integrase catalytic domain.

This is an uncharacterized protein from Sinorhizobium fredii (strain NBRC 101917 / NGR234).